The sequence spans 568 residues: 2-succinyl-5-enolpyruvyl-6-hydroxy-3-cyclohexene-1-carboxylate synthase (568 aa).

Belongs to the TPP enzyme family. MenD subfamily. Homodimer. Mg(2+) is required as a cofactor. Requires Mn(2+) as cofactor. It depends on thiamine diphosphate as a cofactor.

The catalysed reaction is isochorismate + 2-oxoglutarate + H(+) = 5-enolpyruvoyl-6-hydroxy-2-succinyl-cyclohex-3-ene-1-carboxylate + CO2. It functions in the pathway quinol/quinone metabolism; 1,4-dihydroxy-2-naphthoate biosynthesis; 1,4-dihydroxy-2-naphthoate from chorismate: step 2/7. Its pathway is quinol/quinone metabolism; menaquinone biosynthesis. In terms of biological role, catalyzes the thiamine diphosphate-dependent decarboxylation of 2-oxoglutarate and the subsequent addition of the resulting succinic semialdehyde-thiamine pyrophosphate anion to isochorismate to yield 2-succinyl-5-enolpyruvyl-6-hydroxy-3-cyclohexene-1-carboxylate (SEPHCHC). This chain is 2-succinyl-5-enolpyruvyl-6-hydroxy-3-cyclohexene-1-carboxylate synthase, found in Actinobacillus pleuropneumoniae serotype 5b (strain L20).